A 257-amino-acid chain; its full sequence is Zinc transporter ZupT (257 aa).

The next 3 helical transmembrane spans lie at 5-25 (LILTILAGAATFIGAFLGVLG), 32-52 (LLAFSLGFAAGIMLLISLMEM), and 61-81 (GMSPVLGYGMFIFGLLGYFGL). Positions 120 and 123 each coordinate Fe(2+). Residues Glu123 and His148 each coordinate Zn(2+). Transmembrane regions (helical) follow at residues 137 to 157 (LGFGIALAVALHNIPEGLAVA), 171 to 191 (ILWAGISGLAEILGGVLAWLI), 195 to 215 (MISPVVMAAIMAVVAGIMVAL), and 236 to 256 (GVLCGMSVMGFSLVLLQTAGI). Fe(2+) is bound by residues Asn149, Glu152, and Glu181. A Zn(2+)-binding site is contributed by Glu152.

Belongs to the ZIP transporter (TC 2.A.5) family. ZupT subfamily.

The protein resides in the cell inner membrane. The catalysed reaction is Zn(2+)(in) = Zn(2+)(out). Functionally, mediates zinc uptake. May also transport other divalent cations. The polypeptide is Zinc transporter ZupT (Escherichia coli O7:K1 (strain IAI39 / ExPEC)).